A 108-amino-acid chain; its full sequence is UPF0060 membrane protein YnfA (108 aa).

Residues 1–5 (MIKTT) are Periplasmic-facing. The helical transmembrane segment at 6 to 26 (LLFFATALCEIIGCFLPWLWL) threads the bilayer. At 27 to 30 (KRNA) the chain is on the cytoplasmic side. Residues 31–51 (SIWLLLPAGISLALFVWLLTL) traverse the membrane as a helical segment. The Periplasmic portion of the chain corresponds to 52–60 (HPAASGRIY). The helical transmembrane segment at 61–81 (AAYGGVYVCTALMWLRVVDGV) threads the bilayer. Topologically, residues 82 to 84 (KLT) are cytoplasmic. A helical membrane pass occupies residues 85–105 (LYDWTGALIALCGMLIIVAGW). At 106–108 (GRT) the chain is on the periplasmic side.

The protein belongs to the UPF0060 family.

It is found in the cell inner membrane. The polypeptide is UPF0060 membrane protein YnfA (Shigella dysenteriae serotype 1 (strain Sd197)).